A 621-amino-acid polypeptide reads, in one-letter code: 1-deoxy-D-xylulose-5-phosphate synthase (621 aa).

Thiamine diphosphate is bound by residues histidine 80 and 121–123 (GHS). Aspartate 152 provides a ligand contact to Mg(2+). Residues 153-154 (GA), asparagine 181, tyrosine 288, and glutamate 370 contribute to the thiamine diphosphate site. Asparagine 181 contributes to the Mg(2+) binding site.

Belongs to the transketolase family. DXPS subfamily. In terms of assembly, homodimer. Requires Mg(2+) as cofactor. The cofactor is thiamine diphosphate.

The enzyme catalyses D-glyceraldehyde 3-phosphate + pyruvate + H(+) = 1-deoxy-D-xylulose 5-phosphate + CO2. It functions in the pathway metabolic intermediate biosynthesis; 1-deoxy-D-xylulose 5-phosphate biosynthesis; 1-deoxy-D-xylulose 5-phosphate from D-glyceraldehyde 3-phosphate and pyruvate: step 1/1. In terms of biological role, catalyzes the acyloin condensation reaction between C atoms 2 and 3 of pyruvate and glyceraldehyde 3-phosphate to yield 1-deoxy-D-xylulose-5-phosphate (DXP). The protein is 1-deoxy-D-xylulose-5-phosphate synthase of Shewanella woodyi (strain ATCC 51908 / MS32).